Reading from the N-terminus, the 534-residue chain is Arginine--tRNA ligase (534 aa).

A 'HIGH' region motif is present at residues 120–130 (ANPTGFLHLGH).

Belongs to the class-I aminoacyl-tRNA synthetase family. Monomer.

Its subcellular location is the cytoplasm. The catalysed reaction is tRNA(Arg) + L-arginine + ATP = L-arginyl-tRNA(Arg) + AMP + diphosphate. This chain is Arginine--tRNA ligase, found in Mesomycoplasma hyopneumoniae (strain 7448) (Mycoplasma hyopneumoniae).